The chain runs to 89 residues: Cell division topological specificity factor (89 aa).

This sequence belongs to the MinE family.

In terms of biological role, prevents the cell division inhibition by proteins MinC and MinD at internal division sites while permitting inhibition at polar sites. This ensures cell division at the proper site by restricting the formation of a division septum at the midpoint of the long axis of the cell. This chain is Cell division topological specificity factor, found in Janthinobacterium sp. (strain Marseille) (Minibacterium massiliensis).